A 575-amino-acid chain; its full sequence is DNA polymerase lambda (575 aa).

Positions 36–132 (EAEEWLSSLR…RLVDVAGFSI (97 aa)) constitute a BRCT domain. Positions 160-205 (ALLQTALPPPPSPTRPVSPPQKTKEAPNTQAQPISDDEASDGEETQ) are disordered. A compositionally biased stretch (pro residues) spans 166 to 178 (LPPPPSPTRPVSP). Acidic residues predominate over residues 194–203 (SDDEASDGEE). The segment at 265-279 (KAYSVQGDKWRALGY) is DNA-binding. The active-site Schiff-base intermediate with DNA is the K312. Positions 345-348 (GTKT) are DNA-binding. DCTP is bound by residues R386, 417 to 420 (SYRR), and 426 to 429 (GDVD). The involved in primer binding stretch occupies residues 420–429 (RGKATCGDVD). 3 residues coordinate Mn(2+): D427, D429, and D490. The DNA-binding stretch occupies residues 466–505 (ENGQQQKYLGVCRLPGPGWRHRRLDIIVVPYSEFACALLY). Residue N513 participates in dCTP binding.

The protein belongs to the DNA polymerase type-X family. As to quaternary structure, interacts with PCNA. Interacts with PAXX; promoting POLL recruitment to double-strand breaks (DSBs) and stimulation of the end-filling activity of POLL. Interacts with XRCC4; promoting POLL recruitment to double-strand breaks (DSBs) and stimulation of the end-filling activity of POLL. Interacts with NHEJ1/XLF; promoting POLL recruitment to double-strand breaks (DSBs) and stimulation of the end-filling activity of POLL. It depends on Mn(2+) as a cofactor.

The protein localises to the nucleus. The enzyme catalyses DNA(n) + a 2'-deoxyribonucleoside 5'-triphosphate = DNA(n+1) + diphosphate. DNA polymerase that functions in several pathways of DNA repair. Involved in base excision repair (BER) responsible for repair of lesions that give rise to abasic (AP) sites in DNA. Also contributes to DNA double-strand break repair by non-homologous end joining and homologous recombination. Has both template-dependent and template-independent (terminal transferase) DNA polymerase activities. Also has a 5'-deoxyribose-5-phosphate lyase (dRP lyase) activity. The chain is DNA polymerase lambda from Macaca fascicularis (Crab-eating macaque).